The following is a 206-amino-acid chain: Uridine kinase (206 aa).

Position 11–18 (11–18 (GGSASGKT)) interacts with ATP.

The protein belongs to the uridine kinase family.

The protein resides in the cytoplasm. It carries out the reaction uridine + ATP = UMP + ADP + H(+). It catalyses the reaction cytidine + ATP = CMP + ADP + H(+). It functions in the pathway pyrimidine metabolism; CTP biosynthesis via salvage pathway; CTP from cytidine: step 1/3. It participates in pyrimidine metabolism; UMP biosynthesis via salvage pathway; UMP from uridine: step 1/1. The sequence is that of Uridine kinase from Lactococcus lactis subsp. cremoris (strain MG1363).